We begin with the raw amino-acid sequence, 340 residues long: Erythroferrone (340 aa).

The signal sequence occupies residues methionine 1–glycine 24. Disordered stretches follow at residues serine 30–alanine 63, serine 79–glycine 112, and histidine 141–glutamine 161. Positions proline 40–proline 58 are enriched in pro residues. Residues asparagine 84–lysine 95 are compositionally biased toward basic residues. 6 positions are modified to hydroxyproline: proline 99, proline 101, proline 102, proline 104, proline 105, and proline 107. The span at proline 99–glycine 112 shows a compositional bias: pro residues. Residues aspartate 145 to proline 154 are compositionally biased toward polar residues. A C1q domain is found at alanine 185–leucine 340. N-linked (GlcNAc...) asparagine glycans are attached at residues asparagine 229, asparagine 281, asparagine 292, and asparagine 319.

It belongs to the adipolin/erythroferrone family. As to quaternary structure, homodimer; disulfide-linked. Forms trimer, hexamers and higher molecular weight oligomers. May form heteromeric complexes with C1QTNF2 and C1QTNF12 and, to a lesser extent, with C1QTNF5 and C1QTNF10. Interacts with BMP5 and BMP7; the interaction inhibits BMP-induced transcription of HAMP. Interacts with BMP6; the interaction inhibits BMP-induced transcription of HAMP. Interacts with BMP2. Interacts with heterodimers composed of BMP2 and BMP6 in vitro, the interaction inhibits the heterodimer binding to its receptor BMPR1A /ALK3 and thereby suppresses expression of HAMP. In terms of processing, N-glycosylated; required for secretion of the mature protein. As to expression, expressed in the soleus muscle in the leg (at protein level). Found in blood (at protein level). Weakly expressed in the heart (at protein level). Predominantly expressed in skeletal muscle and, at much lower levels, in other tissues, including lung, eye, smooth muscle, brain and kidney. Within skeletal muscles, higher expression levels in soleus as compared with plantaris. Expressed in osteoblasts, mature osteoclasts and erythroblasts. When fasting, females tend to have higher circulating levels than males. Obese mice tend to have lower expression and circulating levels as compared to lean animals. Following EPO treatment, only expressed in bone marrow and spleen.

The protein resides in the secreted. In terms of biological role, iron-regulatory hormone that acts as an erythroid regulator after hemorrhage: produced by erythroblasts following blood loss and mediates suppression of hepcidin (HAMP) expression in the liver, thereby promoting increased iron absorption and mobilization from stores. Promotes lipid uptake into adipocytes and hepatocytes via transcriptional up-regulation of genes involved in fatty acid uptake. Inhibits apoptosis and inflammatory response in cardiomyocytes via promotion of sphingosine-1-phosphate (S1P) and cAMP-dependent activation of AKT signaling. Inhibits autophagy induced by nutrient deficiency in hepatocytes via promoting the phosphorylation of IRS1, AKT, and MTOR, and thereby subsequent activation of the AKT-MTOR signaling pathway. Negatively regulates the differentiation of osteoblasts, potentially via sequestering BMP2, and thereby inhibits the activation of SMAD signaling. The reduction in BMP2 signaling in osteoblasts also results in an increase in expression of the osteoclastogenesis-promoting factors TNFSF11/RANKL and SOST, thereby indirectly promotes bone resorption. This Mus musculus (Mouse) protein is Erythroferrone.